A 714-amino-acid polypeptide reads, in one-letter code: Fatty acid oxidation complex subunit alpha (714 aa).

An enoyl-CoA hydratase region spans residues 1–190 (MEMASAFTLN…KLGLVDDVVP (190 aa)). Residues 306–714 (APLNSVGILG…FWKTTATDLQ (409 aa)) are 3-hydroxyacyl-CoA dehydrogenase.

The protein in the N-terminal section; belongs to the enoyl-CoA hydratase/isomerase family. This sequence in the central section; belongs to the 3-hydroxyacyl-CoA dehydrogenase family. Heterotetramer of two alpha chains (FadJ) and two beta chains (FadI).

It localises to the cytoplasm. It carries out the reaction a (3S)-3-hydroxyacyl-CoA = a (2E)-enoyl-CoA + H2O. The catalysed reaction is a 4-saturated-(3S)-3-hydroxyacyl-CoA = a (3E)-enoyl-CoA + H2O. It catalyses the reaction a (3S)-3-hydroxyacyl-CoA + NAD(+) = a 3-oxoacyl-CoA + NADH + H(+). The enzyme catalyses (3S)-3-hydroxybutanoyl-CoA = (3R)-3-hydroxybutanoyl-CoA. Its pathway is lipid metabolism; fatty acid beta-oxidation. Functionally, catalyzes the formation of a hydroxyacyl-CoA by addition of water on enoyl-CoA. Also exhibits 3-hydroxyacyl-CoA epimerase and 3-hydroxyacyl-CoA dehydrogenase activities. In Escherichia coli O6:K15:H31 (strain 536 / UPEC), this protein is Fatty acid oxidation complex subunit alpha.